Consider the following 236-residue polypeptide: Eukaryotic translation initiation factor 3 subunit J (236 aa).

Residues 1 to 84 (MADDWESAAD…RLEEEAEAQR (84 aa)) are disordered. Positions 28 to 46 (GEDEDEDIKDSWEDEEEKK) are enriched in acidic residues. Composition is skewed to basic and acidic residues over residues 47–58 (DEEKPTKTEAPA) and 68–77 (AKLEQQARLE).

The protein belongs to the eIF-3 subunit J family. In terms of assembly, component of the eukaryotic translation initiation factor 3 (eIF-3) complex. The eIF-3 complex interacts with pix.

Its subcellular location is the cytoplasm. In terms of biological role, component of the eukaryotic translation initiation factor 3 (eIF-3) complex, which is involved in protein synthesis of a specialized repertoire of mRNAs and, together with other initiation factors, stimulates binding of mRNA and methionyl-tRNAi to the 40S ribosome. The eIF-3 complex specifically targets and initiates translation of a subset of mRNAs involved in cell proliferation. The polypeptide is Eukaryotic translation initiation factor 3 subunit J (Drosophila yakuba (Fruit fly)).